The primary structure comprises 373 residues: MPGWSCLVTGAGGFLGQRIIHLLVQEKDLEEVRLLDKVFRPETREEFFKLQTKTKVTVLEGDILDAQCLRRACQGISVVIHTAAAIDVWGIIPRQTIIDINVKGTLNLLEACVQASVPAFIYTSSIDVAGPNSYKEIVLNGHEEQQHESTWSDPYPYSKMMAEKAVLAANGSFLKNGGTLHTCALRPMYIYGEKSSILSGIMIRAIKNNGILKVTGKFSTVNPVYVSNAAWAHILAARGLQDPKKSPNIQGQFYYISDDTPHQSYDDLNNTLSKKWGLRPDSSWRPPVALLYWLGFLLELVNFLLRPVYNYQPPFTRYLVTISNTVFTFSYKKAQRDLGYEPLVGWEEARENTSEWIGSLVEQHKGTLNTKAQ.

Tyr-155 serves as the catalytic Proton acceptor. Lys-159 serves as a coordination point for NAD(+). Residues 288–308 (VALLYWLGFLLELVNFLLRPV) form a helical membrane-spanning segment.

It belongs to the 3-beta-HSD family. In terms of tissue distribution, high levels in adrenal gland, kidney and male liver. Low levels in female liver.

Its subcellular location is the endoplasmic reticulum membrane. The protein resides in the mitochondrion membrane. It carries out the reaction a 3beta-hydroxy-Delta(5)-steroid + NAD(+) = a 3-oxo-Delta(5)-steroid + NADH + H(+). It catalyses the reaction a 3-oxo-Delta(5)-steroid = a 3-oxo-Delta(4)-steroid. The catalysed reaction is pregnenolone + NAD(+) = pregn-5-ene-3,20-dione + NADH + H(+). The enzyme catalyses pregn-5-ene-3,20-dione = progesterone. It carries out the reaction 3beta-hydroxyandrost-5-en-17-one + NAD(+) = androst-5-ene-3,17-dione + NADH + H(+). It catalyses the reaction androst-5-ene-3,17-dione = androst-4-ene-3,17-dione. The protein operates within lipid metabolism; steroid biosynthesis. In terms of biological role, 3-beta-HSD is a bifunctional enzyme, that catalyzes the oxidative conversion of Delta(5)-ene-3-beta-hydroxy steroid, and the oxidative conversion of ketosteroids. The 3-beta-HSD enzymatic system plays a crucial role in the biosynthesis of all classes of hormonal steroids. The chain is 3 beta-hydroxysteroid dehydrogenase/Delta 5--&gt;4-isomerase type 2 (HSD3B2) from Mesocricetus auratus (Golden hamster).